The primary structure comprises 104 residues: UPF0235 protein MTH_637 (104 aa).

Belongs to the UPF0235 family.

This is UPF0235 protein MTH_637 from Methanothermobacter thermautotrophicus (strain ATCC 29096 / DSM 1053 / JCM 10044 / NBRC 100330 / Delta H) (Methanobacterium thermoautotrophicum).